The chain runs to 164 residues: B-phycoerythrin alpha chain (164 aa).

The (2R,3E)-phycoerythrobilin site is built by C82 and C139.

It belongs to the phycobiliprotein family. Heteromer of 6 alpha, 6 beta and one gamma chain. Contains two covalently linked bilin chromophores.

It localises to the plastid. Its subcellular location is the chloroplast thylakoid membrane. Light-harvesting photosynthetic bile pigment-protein from the phycobiliprotein complex. This chain is B-phycoerythrin alpha chain (cpeA), found in Porphyridium purpureum (Red alga).